Here is a 624-residue protein sequence, read N- to C-terminus: Low affinity potassium transport system protein Kup (624 aa).

12 consecutive transmembrane segments (helical) span residues Leu-9–Leu-29, Val-49–Leu-69, Val-103–Ile-123, Pro-137–Ile-157, Val-165–Leu-185, Val-213–Ala-233, Trp-247–Leu-267, Pro-276–Ala-296, Ile-337–Val-357, Leu-365–Thr-385, Phe-398–Leu-418, and Leu-421–Thr-441.

It belongs to the HAK/KUP transporter (TC 2.A.72) family.

The protein localises to the cell inner membrane. The catalysed reaction is K(+)(in) + H(+)(in) = K(+)(out) + H(+)(out). Responsible for the low-affinity transport of potassium into the cell. Likely operates as a K(+):H(+) symporter. The polypeptide is Low affinity potassium transport system protein Kup (Shigella dysenteriae serotype 1 (strain Sd197)).